The sequence spans 110 residues: Cell cycle protein GpsB (110 aa).

Positions 32–73 (LDDVIKDYENYLEQIEKLQMENRRLQQALDKKESEASNVRNS) form a coiled coil.

Belongs to the GpsB family. In terms of assembly, forms polymers through the coiled coil domains. Interacts with PBP1, MreC and EzrA.

The protein resides in the cytoplasm. Functionally, divisome component that associates with the complex late in its assembly, after the Z-ring is formed, and is dependent on DivIC and PBP2B for its recruitment to the divisome. Together with EzrA, is a key component of the system that regulates PBP1 localization during cell cycle progression. Its main role could be the removal of PBP1 from the cell pole after pole maturation is completed. Also contributes to the recruitment of PBP1 to the division complex. Not essential for septum formation. In Streptococcus agalactiae serotype Ia (strain ATCC 27591 / A909 / CDC SS700), this protein is Cell cycle protein GpsB.